Here is a 148-residue protein sequence, read N- to C-terminus: Large ribosomal subunit protein bL9 (148 aa).

Belongs to the bacterial ribosomal protein bL9 family.

Binds to the 23S rRNA. This chain is Large ribosomal subunit protein bL9, found in Agathobacter rectalis (strain ATCC 33656 / DSM 3377 / JCM 17463 / KCTC 5835 / VPI 0990) (Eubacterium rectale).